The following is a 396-amino-acid chain: G-protein coupled receptor 84 (396 aa).

The Extracellular portion of the chain corresponds to 1-26; the sequence is MWNASDVNFSCYHESVLGYRYVAVSW. 2 N-linked (GlcNAc...) asparagine glycosylation sites follow: Asn-3 and Asn-8. Residues 27-47 form a helical membrane-spanning segment; that stretch reads GIVVAVTGTVGNVLTLLALAI. The Cytoplasmic segment spans residues 48–57; the sequence is QPKLRTRFNL. Residues 58–78 form a helical membrane-spanning segment; the sequence is LIANLTVADLLYCTLLQPFSV. The Extracellular segment spans residues 79–94; the sequence is DTYLHLHWRTGATFCQ. Residues 95-115 form a helical membrane-spanning segment; sequence IFGFLLFVSNSVSILTLCLIA. The Cytoplasmic portion of the chain corresponds to 116-144; it reads LGRYLLIAHPKLFPQVFSAKGIVLALVST. Residues 145–165 form a helical membrane-spanning segment; sequence WVVAVASFAPLWPIYILVPVV. At 166 to 180 the chain is on the extracellular side; sequence CTCSFDRIRGQPYTT. The helical transmembrane segment at 181–201 threads the bilayer; that stretch reads ILMGIYFVVGLSSVGVFYCLI. Residues 202 to 320 lie on the Cytoplasmic side of the membrane; it reads HQQVKRAAQA…PSEFGKVTRM (119 aa). Phosphoserine is present on residues Ser-221 and Ser-224. The tract at residues 243 to 310 is disordered; the sequence is SGLASGGPSE…TKGAQRAQDS (68 aa). Residues Thr-263 and Thr-264 each carry the phosphothreonine modification. A helical membrane pass occupies residues 321-341; the sequence is CFAVFLCFTLSYIPFLLLNIL. The Extracellular portion of the chain corresponds to 342–352; that stretch reads DAKVQAPRVVH. A helical membrane pass occupies residues 353–373; that stretch reads MLAANLTWLNGCINPVLYAAM. Topologically, residues 374–396 are cytoplasmic; it reads NRQFRQAYGSLLRRGPQSFHRFH.

Belongs to the G-protein coupled receptor 1 family. In terms of assembly, interacts with ARRB2 and ARR3. Phosphorylated by a subset of GPR84-activating ligands. Constitutively phosphorylated at Ser-221 and Ser-224 in the absence of 2-HTP. By contrast, Thr-263 and Thr-264 are phosphorylated only following prior cell treatment with 2-HTP.

The protein resides in the cell membrane. Its function is as follows. G protein-coupled receptor that responds endogenously to dietary fatty acids or nutrient, specifically medium-chain free fatty acid (FFA) with carbon chain lengths of C9 to C14. Capric acid (C10:0), undecanoic acid (C11:0) and lauric acid (C12:0) are the most potent agonists. In immune cells, functions as a pro-inflammatory receptor via 6-OAU and promotes the expression of pro-inflammatory mediators such as TNFalpha, IL-6 and IL-12B as well as stimulating chemotactic responses through activation of signaling mediators AKT, ERK and NF-kappa-B. In addition, triggers increased bacterial adhesion and phagocytosis in macrophages and regulates pro-inflammatory function via enhancing NLRP3 inflammasome activation. Also plays an important role in inflammation by modulating neutrophil functions. Mechanistically, promotes neutrophil chemotaxis, reactive oxygen species (ROS) production and degranulation via LYN-AKT/ERK pathway. To regulate ROS, communicates with the two formyl peptide receptors FPR2 and FPR1 to control the NADPH oxidase activity in neutrophils. The sequence is that of G-protein coupled receptor 84 (GPR84) from Bos taurus (Bovine).